Consider the following 140-residue polypeptide: Nucleoside diphosphate kinase (140 aa).

ATP-binding residues include K11, F59, R87, T93, R104, and N114. H117 functions as the Pros-phosphohistidine intermediate in the catalytic mechanism.

Belongs to the NDK family. In terms of assembly, homotetramer. It depends on Mg(2+) as a cofactor.

The protein localises to the cytoplasm. The catalysed reaction is a 2'-deoxyribonucleoside 5'-diphosphate + ATP = a 2'-deoxyribonucleoside 5'-triphosphate + ADP. The enzyme catalyses a ribonucleoside 5'-diphosphate + ATP = a ribonucleoside 5'-triphosphate + ADP. In terms of biological role, major role in the synthesis of nucleoside triphosphates other than ATP. The ATP gamma phosphate is transferred to the NDP beta phosphate via a ping-pong mechanism, using a phosphorylated active-site intermediate. This chain is Nucleoside diphosphate kinase, found in Methylobacterium nodulans (strain LMG 21967 / CNCM I-2342 / ORS 2060).